The sequence spans 186 residues: Elongation factor P (186 aa).

The protein belongs to the elongation factor P family.

The protein resides in the cytoplasm. Its pathway is protein biosynthesis; polypeptide chain elongation. Functionally, involved in peptide bond synthesis. Stimulates efficient translation and peptide-bond synthesis on native or reconstituted 70S ribosomes in vitro. Probably functions indirectly by altering the affinity of the ribosome for aminoacyl-tRNA, thus increasing their reactivity as acceptors for peptidyl transferase. The protein is Elongation factor P of Brucella canis (strain ATCC 23365 / NCTC 10854 / RM-666).